Here is a 154-residue protein sequence, read N- to C-terminus: Protein phosphatase 1 regulatory subunit 27 (154 aa).

ANK repeat units lie at residues 63 to 92 (SGLA…DIHQ) and 96 to 125 (AGWT…DRDA).

Interacts with DYSF and PPP1CA.

In terms of biological role, inhibits phosphatase activity of protein phosphatase 1 (PP1) complexes. The polypeptide is Protein phosphatase 1 regulatory subunit 27 (PPP1R27) (Homo sapiens (Human)).